A 147-amino-acid chain; its full sequence is Large ribosomal subunit protein uL13 (147 aa).

Belongs to the universal ribosomal protein uL13 family. Part of the 50S ribosomal subunit.

Its function is as follows. This protein is one of the early assembly proteins of the 50S ribosomal subunit, although it is not seen to bind rRNA by itself. It is important during the early stages of 50S assembly. This is Large ribosomal subunit protein uL13 from Beutenbergia cavernae (strain ATCC BAA-8 / DSM 12333 / CCUG 43141 / JCM 11478 / NBRC 16432 / NCIMB 13614 / HKI 0122).